A 326-amino-acid polypeptide reads, in one-letter code: Melanocortin receptor 4 (326 aa).

Positions 1–14 (MNTSHHHGLHHSFR) are enriched in basic residues. The interval 1–31 (MNTSHHHGLHHSFRNHSQGALPVGKPSHGDR) is disordered. Residues 1-46 (MNTSHHHGLHHSFRNHSQGALPVGKPSHGDRGSASGCYEQLLISTE) lie on the Extracellular side of the membrane. N-linked (GlcNAc...) asparagine glycans are attached at residues asparagine 2 and asparagine 15. Residues 47-67 (IFLTLGLVSLLENILVIAAIV) form a helical membrane-spanning segment. Over 68–71 (KNKN) the chain is Cytoplasmic. A helical transmembrane segment spans residues 72–92 (LHSPMYFFICSLAVADLLVSV). Over 93–121 (SNASETVVMALITGGNLTNRESIIKNMDN) the chain is Extracellular. N-linked (GlcNAc...) asparagine glycosylation is found at asparagine 94 and asparagine 108. A helical transmembrane segment spans residues 122–142 (VFDSMICSSLLASIWSLLAIA). The Cytoplasmic portion of the chain corresponds to 143–163 (VDRYITIFYALRYHNIMTQRR). A helical membrane pass occupies residues 164–184 (AGTIITCIWTFCTVSGVLFIV). At 185–190 (YSESTT) the chain is on the extracellular side. The helical transmembrane segment at 191–211 (VLICLISMFFTMLALMASLYV) threads the bilayer. Residues 212-246 (HMFLLARLHMKRIAALPGNGPIWQAANMKGAITIT) are Cytoplasmic-facing. Residues 247-267 (ILLGVFVVCWAPFFLHLILMI) form a helical membrane-spanning segment. Residues 268-281 (SCPRNPYCVCFMSH) are Extracellular-facing. The helical transmembrane segment at 282 to 302 (FNMYLILIMCNSVIDPLIYAF) threads the bilayer. Residues 303-326 (RSQEMRKTFKEICCCWYGLASLCV) are Cytoplasmic-facing. Cysteine 316 carries the S-palmitoyl cysteine lipid modification.

Belongs to the G-protein coupled receptor 1 family. As to quaternary structure, homodimer; disulfide-linked, also forms higher order oligomers. Interacts with mrap2a; decreasing ligand-sensitivity. Interacts with mrap2b; increasing ligand-sensitivity and generation of cAMP.

Its subcellular location is the cell membrane. Receptor specific to the heptapeptide core common to adrenocorticotropic hormone and alpha-, beta-, and gamma-MSH. Plays a central role in energy homeostasis and somatic growth. This receptor is mediated by G proteins that stimulate adenylate cyclase (cAMP). This chain is Melanocortin receptor 4 (mc4r), found in Danio rerio (Zebrafish).